We begin with the raw amino-acid sequence, 353 residues long: MSGEGLVSAAAAPEEQAFEAGLRPKNLDEFVGQRKVREQLSIMLEGARGRGRPPDHVLLSGPPGLGKTSLAMIIAEELGVPLRMTSGPAIERAGDLVAILTALTPGEVLFLDEIHRIARPAEELLYAAMEDFRVDVVLGKGPGATAIPLDLAPFTLVGATTRSGLLTGPLRDRFGFTAHMDFYDAAELALVLTRSARLLGVQLTEGGAAEVAGRSRGTPRIANRLLRRVRDYAEVRADGVVSREVARAALRIYDVDALGLDRLDRAVLDALVRRFGGGPVGLSTLAVAVGEEADTVEDVSEPFLLRAGLLIRTARGRVATPAAFTHLGLEPQSDQLGRSQAPAALFGEDLPAS.

A large ATPase domain (RuvB-L) region spans residues 1–183 (MSGEGLVSAA…FGFTAHMDFY (183 aa)). ATP contacts are provided by residues L22, R23, G64, K67, T68, S69, 130–132 (EDF), R173, Y183, and R220. Residue T68 coordinates Mg(2+). The segment at 184-254 (DAAELALVLT…VARAALRIYD (71 aa)) is small ATPAse domain (RuvB-S). Positions 257 to 353 (ALGLDRLDRA…ALFGEDLPAS (97 aa)) are head domain (RuvB-H). DNA is bound by residues R312 and R317.

It belongs to the RuvB family. As to quaternary structure, homohexamer. Forms an RuvA(8)-RuvB(12)-Holliday junction (HJ) complex. HJ DNA is sandwiched between 2 RuvA tetramers; dsDNA enters through RuvA and exits via RuvB. An RuvB hexamer assembles on each DNA strand where it exits the tetramer. Each RuvB hexamer is contacted by two RuvA subunits (via domain III) on 2 adjacent RuvB subunits; this complex drives branch migration. In the full resolvosome a probable DNA-RuvA(4)-RuvB(12)-RuvC(2) complex forms which resolves the HJ.

The protein localises to the cytoplasm. The enzyme catalyses ATP + H2O = ADP + phosphate + H(+). Its function is as follows. The RuvA-RuvB-RuvC complex processes Holliday junction (HJ) DNA during genetic recombination and DNA repair, while the RuvA-RuvB complex plays an important role in the rescue of blocked DNA replication forks via replication fork reversal (RFR). RuvA specifically binds to HJ cruciform DNA, conferring on it an open structure. The RuvB hexamer acts as an ATP-dependent pump, pulling dsDNA into and through the RuvAB complex. RuvB forms 2 homohexamers on either side of HJ DNA bound by 1 or 2 RuvA tetramers; 4 subunits per hexamer contact DNA at a time. Coordinated motions by a converter formed by DNA-disengaged RuvB subunits stimulates ATP hydrolysis and nucleotide exchange. Immobilization of the converter enables RuvB to convert the ATP-contained energy into a lever motion, pulling 2 nucleotides of DNA out of the RuvA tetramer per ATP hydrolyzed, thus driving DNA branch migration. The RuvB motors rotate together with the DNA substrate, which together with the progressing nucleotide cycle form the mechanistic basis for DNA recombination by continuous HJ branch migration. Branch migration allows RuvC to scan DNA until it finds its consensus sequence, where it cleaves and resolves cruciform DNA. The sequence is that of Holliday junction branch migration complex subunit RuvB from Parafrankia sp. (strain EAN1pec).